Here is a 377-residue protein sequence, read N- to C-terminus: Succinyl-diaminopimelate desuccinylase (377 aa).

H67 serves as a coordination point for Zn(2+). Residue D69 is part of the active site. Zn(2+) is bound at residue D100. E134 (proton acceptor) is an active-site residue. Zn(2+)-binding residues include E135, E163, and H349.

It belongs to the peptidase M20A family. DapE subfamily. In terms of assembly, homodimer. Zn(2+) serves as cofactor. It depends on Co(2+) as a cofactor.

It catalyses the reaction N-succinyl-(2S,6S)-2,6-diaminopimelate + H2O = (2S,6S)-2,6-diaminopimelate + succinate. The protein operates within amino-acid biosynthesis; L-lysine biosynthesis via DAP pathway; LL-2,6-diaminopimelate from (S)-tetrahydrodipicolinate (succinylase route): step 3/3. Functionally, catalyzes the hydrolysis of N-succinyl-L,L-diaminopimelic acid (SDAP), forming succinate and LL-2,6-diaminopimelate (DAP), an intermediate involved in the bacterial biosynthesis of lysine and meso-diaminopimelic acid, an essential component of bacterial cell walls. The polypeptide is Succinyl-diaminopimelate desuccinylase (Glaesserella parasuis serovar 5 (strain SH0165) (Haemophilus parasuis)).